Reading from the N-terminus, the 558-residue chain is MTTHEPRTVRAPRGPHKTAKGWIQEAAKRMLMNNLDPEVAEHPESLVVYGGRGKAARNWEAFDHIVATLDRLENDETLLVQSGKPVAVLRTHEWAPRVLIANSNLVPHWANWETFDKLDQAGLMMYGQMTAGSWIYIGTQGILQGTYETFAGAAQKHFGGSLKGTITVTAGLGGMGGAQPLAVKLAGGVSITIEIDPTRIRKRLETRYLDEVADNLQDAIARAEGYKAQGVARSIGVQGNAAELVPQLVEMNWTPDLLTDQTSAHDPMWGYIPPVNADEDAGKLRSEHAEEYRQRAYAAMAAHVRAMLELQKRGAVTFDYGNNLRQRAFEAGVEDAFSYPGFVPAFIRDSFCEGRGPFRWVALSGDPQDIYATDKALLELFPEDERLQSWLTYAADQIAFQGLPARICWLGYKERDRAAKLFNDMVKDGRVKAPIVIGRDHLDAGSVASPYRETEAMKDGSDAVSDWPLLNFGVGIASGASWMSFHHGGGVGLGFSQHSGLVIVADGTDEAAKKLSRALTNDPGMGVIRHADAGYDHALDVARERGIDLPSLGIKDHA.

Residues 50–51, Gln-128, 174–176, Glu-194, Arg-199, 240–241, 261–265, 271–272, and Tyr-320 contribute to the NAD(+) site; these read GG, GMG, NA, QTSAH, and YI. Cys-408 is a catalytic residue. Position 490 (Gly-490) interacts with NAD(+).

It belongs to the urocanase family. The cofactor is NAD(+).

Its subcellular location is the cytoplasm. The enzyme catalyses 4-imidazolone-5-propanoate = trans-urocanate + H2O. The protein operates within amino-acid degradation; L-histidine degradation into L-glutamate; N-formimidoyl-L-glutamate from L-histidine: step 2/3. Functionally, catalyzes the conversion of urocanate to 4-imidazolone-5-propionate. This chain is Urocanate hydratase, found in Deinococcus radiodurans (strain ATCC 13939 / DSM 20539 / JCM 16871 / CCUG 27074 / LMG 4051 / NBRC 15346 / NCIMB 9279 / VKM B-1422 / R1).